We begin with the raw amino-acid sequence, 357 residues long: MRPARALIDLQALRHNYQLARETSGVRALAVIKADAYGHGAVRCAQALEGEADGFAVACIEEALELRAAGIRAPVLLLEGFFEASELALIVEHDFWCVVHSLWQLEAIEQAAVAKPLTVWLKLDSGMHRVGLHPKDYQVAYQRLQASGKVEKIVLMSHFARADELDCPRSSEQVAVFEAARQGLGAEISLRNSPAVMGWPSVPSDWVRPGIMLYGSTPFEENNSVAARLQPVMTLESKVICVRELPAGEPVGYGARFITDRPMRIGVVAMGYADGYPRHAPTGTPVLVAGQRSRLLGRVSMDMLCVDLTDVPQAGLGSTVELWGKNILASDVAQAADTIPYQLFCNLRRVPLVYCEG.

K33 functions as the Proton acceptor; specific for D-alanine in the catalytic mechanism. An N6-(pyridoxal phosphate)lysine modification is found at K33. A substrate-binding site is contributed by R129. Y253 functions as the Proton acceptor; specific for L-alanine in the catalytic mechanism. Residue M301 participates in substrate binding.

This sequence belongs to the alanine racemase family. The cofactor is pyridoxal 5'-phosphate.

It carries out the reaction L-alanine = D-alanine. It functions in the pathway amino-acid biosynthesis; D-alanine biosynthesis; D-alanine from L-alanine: step 1/1. Functionally, catalyzes the interconversion of L-alanine and D-alanine. May also act on other amino acids. The protein is Alanine racemase (alr) of Pseudomonas fluorescens (strain ATCC BAA-477 / NRRL B-23932 / Pf-5).